Consider the following 101-residue polypeptide: Large ribosomal subunit protein uL24 (101 aa).

Belongs to the universal ribosomal protein uL24 family. In terms of assembly, part of the 50S ribosomal subunit.

One of two assembly initiator proteins, it binds directly to the 5'-end of the 23S rRNA, where it nucleates assembly of the 50S subunit. Functionally, one of the proteins that surrounds the polypeptide exit tunnel on the outside of the subunit. The polypeptide is Large ribosomal subunit protein uL24 (Paracoccus denitrificans (strain Pd 1222)).